We begin with the raw amino-acid sequence, 243 residues long: NEDD4-binding protein 2-like 1 (243 aa).

The segment at 1 to 38 is disordered; it reads MEDSFLQSFGRLSLQPQQQQQRQRPPRPPPRGTPPRRH.

As to quaternary structure, interacts with dynactin subunit proteins, including DCTN4, DCTN5 and DCTN5.

Its function is as follows. Might play a role in adipocyte differentiation and triglyceride accumulation. The chain is NEDD4-binding protein 2-like 1 (N4BP2L1) from Homo sapiens (Human).